Reading from the N-terminus, the 103-residue chain is MSEFNNVSVVKEANIYFEGKVTSRTVIFPDGSRKTLGLMLPGEYTFNTGSAELMEILSGEMTVVLPGSPDPVAIKGGEAFEVPENSSFKVNVTAVSDYICSFL.

It belongs to the nucleoside phosphorylase PpnP family.

The enzyme catalyses a purine D-ribonucleoside + phosphate = a purine nucleobase + alpha-D-ribose 1-phosphate. It carries out the reaction adenosine + phosphate = alpha-D-ribose 1-phosphate + adenine. The catalysed reaction is cytidine + phosphate = cytosine + alpha-D-ribose 1-phosphate. It catalyses the reaction guanosine + phosphate = alpha-D-ribose 1-phosphate + guanine. The enzyme catalyses inosine + phosphate = alpha-D-ribose 1-phosphate + hypoxanthine. It carries out the reaction thymidine + phosphate = 2-deoxy-alpha-D-ribose 1-phosphate + thymine. The catalysed reaction is uridine + phosphate = alpha-D-ribose 1-phosphate + uracil. It catalyses the reaction xanthosine + phosphate = alpha-D-ribose 1-phosphate + xanthine. Functionally, catalyzes the phosphorolysis of diverse nucleosides, yielding D-ribose 1-phosphate and the respective free bases. Can use uridine, adenosine, guanosine, cytidine, thymidine, inosine and xanthosine as substrates. Also catalyzes the reverse reactions. The polypeptide is Pyrimidine/purine nucleoside phosphorylase (Citrifermentans bemidjiense (strain ATCC BAA-1014 / DSM 16622 / JCM 12645 / Bem) (Geobacter bemidjiensis)).